Here is a 329-residue protein sequence, read N- to C-terminus: Phenylalanine--tRNA ligase alpha subunit (329 aa).

Glutamate 254 contacts Mg(2+).

It belongs to the class-II aminoacyl-tRNA synthetase family. Phe-tRNA synthetase alpha subunit type 1 subfamily. In terms of assembly, tetramer of two alpha and two beta subunits. Mg(2+) is required as a cofactor.

It is found in the cytoplasm. It catalyses the reaction tRNA(Phe) + L-phenylalanine + ATP = L-phenylalanyl-tRNA(Phe) + AMP + diphosphate + H(+). This chain is Phenylalanine--tRNA ligase alpha subunit, found in Haemophilus influenzae (strain 86-028NP).